The sequence spans 328 residues: 4-hydroxythreonine-4-phosphate dehydrogenase (328 aa).

A substrate-binding site is contributed by threonine 125. Residues histidine 160, histidine 203, and histidine 269 each contribute to the a divalent metal cation site. Lysine 277, asparagine 286, and arginine 295 together coordinate substrate.

It belongs to the PdxA family. In terms of assembly, homodimer. Requires a divalent metal cation as cofactor.

The protein resides in the cytoplasm. It carries out the reaction 4-(phosphooxy)-L-threonine + NAD(+) = 3-amino-2-oxopropyl phosphate + CO2 + NADH. It participates in cofactor biosynthesis; pyridoxine 5'-phosphate biosynthesis; pyridoxine 5'-phosphate from D-erythrose 4-phosphate: step 4/5. Its function is as follows. Catalyzes the NAD(P)-dependent oxidation of 4-(phosphooxy)-L-threonine (HTP) into 2-amino-3-oxo-4-(phosphooxy)butyric acid which spontaneously decarboxylates to form 3-amino-2-oxopropyl phosphate (AHAP). The protein is 4-hydroxythreonine-4-phosphate dehydrogenase of Synechococcus sp. (strain RCC307).